The following is a 311-amino-acid chain: MEIKLANPRGFCAGVDRAIDIVNRALDVFGAPIYVRHEVVHNKFVVERLKERGAIFVDELEAVPDDVIVIFSAHGVSQAVRQEADRRGLKVFDATCPLVTKVHMEVAKYSNDGCECVLIGHEGHPEVEGTMGQYDTANGGAIYLVEDESDVEQLEVRDPTRLSYVTQTTLSMDDTARVIDSLRAKFPHITGPRKDDICYATQNRQDAVKQLALECDLVLVVGSPNSSNSNRLRELAERCGTAAYLIDGPEDLDKSWFANCKNIGITAGASAPEVLVRDVIEGLKAIGASAPVELQGQEENISFSLPKELRV.

C12 is a [4Fe-4S] cluster binding site. H41 and H74 together coordinate (2E)-4-hydroxy-3-methylbut-2-enyl diphosphate. Positions 41 and 74 each coordinate dimethylallyl diphosphate. H41 and H74 together coordinate isopentenyl diphosphate. C96 provides a ligand contact to [4Fe-4S] cluster. H124 provides a ligand contact to (2E)-4-hydroxy-3-methylbut-2-enyl diphosphate. Dimethylallyl diphosphate is bound at residue H124. H124 contributes to the isopentenyl diphosphate binding site. E126 functions as the Proton donor in the catalytic mechanism. T168 contacts (2E)-4-hydroxy-3-methylbut-2-enyl diphosphate. C198 serves as a coordination point for [4Fe-4S] cluster. Residues S226, S227, N228, and S270 each coordinate (2E)-4-hydroxy-3-methylbut-2-enyl diphosphate. Dimethylallyl diphosphate contacts are provided by S226, S227, N228, and S270. Isopentenyl diphosphate-binding residues include S226, S227, N228, and S270.

This sequence belongs to the IspH family. The cofactor is [4Fe-4S] cluster.

It catalyses the reaction isopentenyl diphosphate + 2 oxidized [2Fe-2S]-[ferredoxin] + H2O = (2E)-4-hydroxy-3-methylbut-2-enyl diphosphate + 2 reduced [2Fe-2S]-[ferredoxin] + 2 H(+). It carries out the reaction dimethylallyl diphosphate + 2 oxidized [2Fe-2S]-[ferredoxin] + H2O = (2E)-4-hydroxy-3-methylbut-2-enyl diphosphate + 2 reduced [2Fe-2S]-[ferredoxin] + 2 H(+). It participates in isoprenoid biosynthesis; dimethylallyl diphosphate biosynthesis; dimethylallyl diphosphate from (2E)-4-hydroxy-3-methylbutenyl diphosphate: step 1/1. The protein operates within isoprenoid biosynthesis; isopentenyl diphosphate biosynthesis via DXP pathway; isopentenyl diphosphate from 1-deoxy-D-xylulose 5-phosphate: step 6/6. Catalyzes the conversion of 1-hydroxy-2-methyl-2-(E)-butenyl 4-diphosphate (HMBPP) into a mixture of isopentenyl diphosphate (IPP) and dimethylallyl diphosphate (DMAPP). Acts in the terminal step of the DOXP/MEP pathway for isoprenoid precursor biosynthesis. The polypeptide is 4-hydroxy-3-methylbut-2-enyl diphosphate reductase (Saccharophagus degradans (strain 2-40 / ATCC 43961 / DSM 17024)).